The primary structure comprises 234 residues: Small ribosomal subunit protein uS2c (234 aa).

It belongs to the universal ribosomal protein uS2 family.

Its subcellular location is the plastid. It localises to the chloroplast. The sequence is that of Small ribosomal subunit protein uS2c (rps2) from Pinus koraiensis (Korean pine).